A 181-amino-acid chain; its full sequence is Adenine phosphoribosyltransferase (181 aa).

The protein belongs to the purine/pyrimidine phosphoribosyltransferase family. In terms of assembly, homodimer.

The protein resides in the cytoplasm. The enzyme catalyses AMP + diphosphate = 5-phospho-alpha-D-ribose 1-diphosphate + adenine. It functions in the pathway purine metabolism; AMP biosynthesis via salvage pathway; AMP from adenine: step 1/1. Functionally, catalyzes a salvage reaction resulting in the formation of AMP, that is energically less costly than de novo synthesis. This Methylobacterium radiotolerans (strain ATCC 27329 / DSM 1819 / JCM 2831 / NBRC 15690 / NCIMB 10815 / 0-1) protein is Adenine phosphoribosyltransferase.